Here is a 294-residue protein sequence, read N- to C-terminus: MTQDYIVKALAFDGDIRAYAAVTTNAVQEAQTRHYTWPTASAALGRTMTATAMMGAMLKGDQKLTVTVDGHGPIGRIVADADAKGDIRGYVTNPQTHFPLNDQGKLDVRRAVGTDGTLTVVKDVGLKDYFSGSSPIVSGELGDDFTYYYATSEQVPSSVGLGVLVNPDNSIKAAGGFIIQVMPNAKEETIDKVEKAIGNMTPVSKLIDQGLSPEELLTEILGKENVKFLETVPVKFECNCSHEKFLNAIKGLGEAEIQAMIDEDHGAEAECHFCRAKYQYSEAELKGLIEELNA.

2 disulfides stabilise this stretch: Cys-238/Cys-240 and Cys-271/Cys-274.

Belongs to the HSP33 family. Post-translationally, under oxidizing conditions two disulfide bonds are formed involving the reactive cysteines. Under reducing conditions zinc is bound to the reactive cysteines and the protein is inactive.

The protein resides in the cytoplasm. Functionally, redox regulated molecular chaperone. Protects both thermally unfolding and oxidatively damaged proteins from irreversible aggregation. Plays an important role in the bacterial defense system toward oxidative stress. This Staphylococcus carnosus (strain TM300) protein is 33 kDa chaperonin.